A 369-amino-acid chain; its full sequence is Tetraacyldisaccharide 4'-kinase (369 aa).

52 to 59 (TVGGTGKT) is an ATP binding site.

This sequence belongs to the LpxK family.

It carries out the reaction a lipid A disaccharide + ATP = a lipid IVA + ADP + H(+). It participates in glycolipid biosynthesis; lipid IV(A) biosynthesis; lipid IV(A) from (3R)-3-hydroxytetradecanoyl-[acyl-carrier-protein] and UDP-N-acetyl-alpha-D-glucosamine: step 6/6. Transfers the gamma-phosphate of ATP to the 4'-position of a tetraacyldisaccharide 1-phosphate intermediate (termed DS-1-P) to form tetraacyldisaccharide 1,4'-bis-phosphate (lipid IVA). The chain is Tetraacyldisaccharide 4'-kinase from Parabacteroides distasonis (strain ATCC 8503 / DSM 20701 / CIP 104284 / JCM 5825 / NCTC 11152).